Here is a 343-residue protein sequence, read N- to C-terminus: tRNA N6-adenosine threonylcarbamoyltransferase (343 aa).

Residues His-116 and His-120 each coordinate Fe cation. Substrate contacts are provided by residues 138–142 (LVSGG), Asp-171, Gly-184, Asp-188, and Asn-277. Fe cation is bound at residue Asp-306.

Belongs to the KAE1 / TsaD family. Fe(2+) serves as cofactor.

It localises to the cytoplasm. The catalysed reaction is L-threonylcarbamoyladenylate + adenosine(37) in tRNA = N(6)-L-threonylcarbamoyladenosine(37) in tRNA + AMP + H(+). Functionally, required for the formation of a threonylcarbamoyl group on adenosine at position 37 (t(6)A37) in tRNAs that read codons beginning with adenine. Is involved in the transfer of the threonylcarbamoyl moiety of threonylcarbamoyl-AMP (TC-AMP) to the N6 group of A37, together with TsaE and TsaB. TsaD likely plays a direct catalytic role in this reaction. This chain is tRNA N6-adenosine threonylcarbamoyltransferase, found in Ligilactobacillus salivarius (strain UCC118) (Lactobacillus salivarius).